The primary structure comprises 86 residues: Large ribosomal subunit protein bL31B (86 aa).

Belongs to the bacterial ribosomal protein bL31 family. Type B subfamily. Part of the 50S ribosomal subunit.

In Vibrio vulnificus (strain YJ016), this protein is Large ribosomal subunit protein bL31B.